The primary structure comprises 780 residues: Ino eighty subunit 1 (780 aa).

Disordered stretches follow at residues 1–25 (MADV…QQIH) and 563–780 (ANGP…PGWN). The segment covering 563–584 (ANGPRRDRKKEREERQKAREEA) has biased composition (basic and acidic residues). Residues 600–613 (SRARAQRNAKRKLA) are compositionally biased toward basic residues. Residues 614 to 635 (RAAAAASSTPSASTPKTAAARS) are compositionally biased toward low complexity. Acidic residues-rich tracts occupy residues 676-686 (LEGEESLDDID) and 723-751 (DADD…EGDD).

As to quaternary structure, component of the chromatin-remodeling INO80 complex.

The protein localises to the nucleus. In terms of biological role, probably involved in transcription regulation via its interaction with the INO80 complex, a chromatin-remodeling complex. This chain is Ino eighty subunit 1, found in Emericella nidulans (strain FGSC A4 / ATCC 38163 / CBS 112.46 / NRRL 194 / M139) (Aspergillus nidulans).